The primary structure comprises 105 residues: UPF0235 protein Mchl_2407 (105 aa).

The protein belongs to the UPF0235 family.

The polypeptide is UPF0235 protein Mchl_2407 (Methylorubrum extorquens (strain CM4 / NCIMB 13688) (Methylobacterium extorquens)).